Reading from the N-terminus, the 265-residue chain is Neuronal membrane glycoprotein M6-b (265 aa).

The helical transmembrane segment at 31–51 threads the bilayer; the sequence is GGVPYASLVATILCFSGVALF. Residue Asn73 is glycosylated (N-linked (GlcNAc...) asparagine). The next 2 helical transmembrane spans lie at 90–110 and 136–156; these read VIYG…AEGF and FVFL…FSAV. An N-linked (GlcNAc...) asparagine glycan is attached at Asn177. A helical membrane pass occupies residues 224–244; that stretch reads LFIVACAGAGATVIALLIYMM. A Phosphoserine modification is found at Ser257.

The protein belongs to the myelin proteolipid protein family. As to quaternary structure, interacts with SERT. In terms of tissue distribution, neurons and glia; cerebellar Bergmann glia, in glia within white matter tracts of the cerebellum and cerebrum, and in embryonic dorsal root ganglia.

Its subcellular location is the cell membrane. May be involved in neural development. Involved in regulation of osteoblast function and bone formation. Involved in matrix vesicle release by osteoblasts; this function seems to involve maintenance of the actin cytoskeleton. May be involved in cellular trafficking of SERT and thereby in regulation of serotonin uptake. The chain is Neuronal membrane glycoprotein M6-b (GPM6B) from Homo sapiens (Human).